We begin with the raw amino-acid sequence, 514 residues long: Serine/threonine-protein kinase 33 (514 aa).

Positions 65-86 (INRDITSRKDLPSRTSNVERKA) are enriched in basic and acidic residues. The interval 65-91 (INRDITSRKDLPSRTSNVERKASQQQW) is disordered. A Protein kinase domain is found at 116–381 (YTFGRILGKG…AKELLDNQWL (266 aa)). Residues 122–130 (LGKGSFGIV) and Lys-145 contribute to the ATP site. Residue Asp-238 is the Proton acceptor of the active site. Disordered stretches follow at residues 402–468 (KNNP…DMCS) and 485–514 (MEKT…KKKL). Ser-407 carries the post-translational modification Phosphoserine. Positions 413-426 (TEEKNKPSTEEKLK) are enriched in basic and acidic residues. Residues 449-468 (STAYEKQFPATSKDNFDMCS) are compositionally biased toward polar residues.

Belongs to the protein kinase superfamily. CAMK Ser/Thr protein kinase family. CaMK subfamily. As to quaternary structure, homodimer. Autophosphorylated. As to expression, highly expressed in testis, fetal lung and heart, followed by pituitary gland, kidney, interventricular septum, pancreas, heart, trachea, thyroid gland and uterus. Weak hybridization signals were observed in the following tissues: amygdala, aorta, esophagus, colon ascending, colon transverse, skeletal muscle, spleen, peripheral blood leukocyte, lymph node, bone marrow, placenta, prostate, liver, salivary gland, mammary gland, some tumor cell lines, fetal brain, fetal liver, fetal spleen and fetal thymus. No signal at all was detectable in RNA from tissues of the nervous system.

It is found in the cytoplasm. Its subcellular location is the cytoskeleton. It localises to the perinuclear region. It catalyses the reaction L-seryl-[protein] + ATP = O-phospho-L-seryl-[protein] + ADP + H(+). The catalysed reaction is L-threonyl-[protein] + ATP = O-phospho-L-threonyl-[protein] + ADP + H(+). Specifically inhibited by CDD-2807 ((3-([1,1'-Biphenyl]-2-ylethynyl)-1H-indazol-5-yl)(2,6-diazaspiro[3.5]nonan-2-yl)methanone). Functionally, serine/threonine protein kinase required for spermatid differentiation and male fertility. Promotes sperm flagella assembly during spermatogenesis by mediating phosphorylation of fibrous sheath proteins AKAP3 and AKAP4. Also phosphorylates vimentin/VIM, thereby regulating the dynamic behavior of the intermediate filament cytoskeleton. In Homo sapiens (Human), this protein is Serine/threonine-protein kinase 33.